Consider the following 91-residue polypeptide: Acylphosphatase (91 aa).

Residues 3–91 (CLRAIVKGKV…ANYSDFRIKH (89 aa)) enclose the Acylphosphatase-like domain. Active-site residues include Arg-18 and Asn-36.

This sequence belongs to the acylphosphatase family.

The enzyme catalyses an acyl phosphate + H2O = a carboxylate + phosphate + H(+). In Dehalococcoides mccartyi (strain ATCC BAA-2100 / JCM 16839 / KCTC 5957 / BAV1), this protein is Acylphosphatase (acyP).